We begin with the raw amino-acid sequence, 54 residues long: MKTFKEFIKEDMVAGDSGGNPENISIGTTSGAVVNKGPEQIPKKKKEESKEKEE.

Residues 13–54 form a disordered region; it reads VAGDSGGNPENISIGTTSGAVVNKGPEQIPKKKKEESKEKEE. Polar residues predominate over residues 20-32; sequence NPENISIGTTSGA. A compositionally biased stretch (basic and acidic residues) spans 41 to 54; that stretch reads IPKKKKEESKEKEE.

This is an uncharacterized protein from Enterobacteria phage T4 (Bacteriophage T4).